The chain runs to 1457 residues: MQQQQQPSIDQLPEPTASTSNSATTKPTIATATTSTTTTSGNNFHQQLQATTAATMQRLRTTFTRSRTPTGAEMKMQNSLEVPKQVRSASFDEMQLESQRASSSLLKQQSSSSASADERSSEAGFLQVPLAAHQQRSHSFDSATASAGSDDSGTFLEVPRRLKARRSSSTKTPPPCIHCHYLEEYERRMTAEQRYFIDHRELTALSYSNTSSEASEDEDEVEGHNAEEEEEGSAAIEDAEEETTEAATEEADEDPRTEVESEHDHDPDDDAALEMDIRIGNMSQGSSIEESRARLPRQMRRHTIGSSSVTSASEDEGLEGSDNGSPHFGNTLLPPQPTTPCGITFTLSPTNGDYPSPPHLPLDPGSPPISPCSSNSGRLPALAPIISTPCSSADADDAGAAMGLPVRARRRSISRQEAIFVEPTGNSLENVSHEEVDNSNTKSSVDTADSLDEASTMATCGSPGAAGGSGASSSHHNAFVVRDIYLMVPDLKRDRAASVDSCFSKLSSNAKTEELQPSADGCFLTVPNINATRSRSVDIVLPTDEQARYKALSMTGSTVTYADGRTASASNSRRPIRIVPDWTENAVQGEHYWKPTSASGDLCCLNEECIKSGQRMKCSACQLVAHHNCIPFVNEKSTLACKPTYRDVGIRQYREQTTTHHHWVHRKLEKGKCKQCGKFFPMKQAVQSKLFGSKEIVALACAWCHEIYHNKEACFNQAKIGEECRLGNYAPIIVPPSWIVKLPTKGNFKSSIRVSNKNNAASGSGGGGAGGGAGGGGGKSKKQTQRRQKGKEEKKEPRAFIVKPIPSPEVIPVIVFINPKSGGNQGHKLLGKFQHLLNPRQVFDLTQGGPKMGLDMFRKAPNLRVLACGGDGTVGWVLSVLDQIQPPLQPAPAVGVLPLGTGNDLARALGWGGGYTDEPIGKILREIGMSQCVLMDRWRVKVTPNDDVTDDHVDRSKPNVPLNVINNYFSFGVDAHIALEFHEAREAHPERFNSRLRNKMYYGQMGGKDLILRQYRNLSQWVTLECDGQDFTGKLRDAGCHAVLFLNIPSYGGGTHPWNDSFGASKPSIDDGLMEVVGLTTYQLPMLQAGMHGTCICQCRKARIITKRTIPMQVDGEACRVKPSVIEIELLNKALMLSKRKHGRGDVQVNPLEKMQLHILRVTMQQYEQYHYDKEMLRKLANKLGQIEIESQCDLEHVRNMLNTKFEESISYPKVSQDWCFIDSCTAEHYFRIDRAQEHLHYICDIAIDELYILDHEAATMPQTPDQERSFAAFSQRQAQNERRQMDQAQGRGPGSTDEDLQIGSKPIKVMKWKSPILEQTSDAILLAAQSGDLNMLRALHEQGYSLQSVNKNGQTALHFACKYNHRDIVKYIIASATRRLINMADKELGQTALHIAAEQNRRDICVMLVAAGAHLDTLDSGGNTPMMVAFNKNANEIATYLESKQGTQPVDGWLDD.

3 disordered regions span residues 1–123 (MQQQ…SSEA), 136–177 (RSHS…PPCI), and 207–339 (YSNT…QPTT). Low complexity-rich tracts occupy residues 22-62 (SATT…LRTT), 98-115 (SQRASSSLLKQQSSSSAS), and 141-154 (DSATASAGSDDSGT). Acidic residues predominate over residues 214 to 253 (ASEDEDEVEGHNAEEEEEGSAAIEDAEEETTEAATEEADE). Over residues 254 to 266 (DPRTEVESEHDHD) the composition is skewed to basic and acidic residues. Positions 294-303 (RLPRQMRRHT) are enriched in basic residues. Phorbol-ester/DAG-type zinc fingers lie at residues 591–641 (HYWK…TLAC) and 661–724 (HHWV…GEEC). The tract at residues 758-799 (NNAASGSGGGGAGGGAGGGGGKSKKQTQRRQKGKEEKKEPRA) is disordered. Residues 763–778 (GSGGGGAGGGAGGGGG) are compositionally biased toward gly residues. The segment covering 779–789 (KSKKQTQRRQK) has biased composition (basic residues). The DAGKc domain maps to 808–944 (PEVIPVIVFI…MDRWRVKVTP (137 aa)). The segment at 1264 to 1302 (TPDQERSFAAFSQRQAQNERRQMDQAQGRGPGSTDEDLQ) is disordered. 4 ANK repeats span residues 1320 to 1349 (QTSDAILLAAQSGDLNMLRALHEQGYSLQS), 1353 to 1382 (NGQTALHFACKYNHRDIVKYIIASATRRLI), 1389 to 1418 (LGQTALHIAAEQNRRDICVMLVAAGAHLDT), and 1422 to 1451 (GGNTPMMVAFNKNANEIATYLESKQGTQPV).

The protein belongs to the eukaryotic diacylglycerol kinase family. In terms of tissue distribution, expressed specifically in adult eye.

Its subcellular location is the membrane. It catalyses the reaction a 1,2-diacyl-sn-glycerol + ATP = a 1,2-diacyl-sn-glycero-3-phosphate + ADP + H(+). Functionally, required for the maintenance of phospholipid turnover within the photoreceptor. This Drosophila melanogaster (Fruit fly) protein is Eye-specific diacylglycerol kinase (rdgA).